The following is a 257-amino-acid chain: Ribosome-inactivating protein charybdin (257 aa).

The active site involves glutamate 167. Residues cysteine 217 and cysteine 254 are joined by a disulfide bond.

Belongs to the ribosome-inactivating protein family. Type 1 RIP subfamily.

It catalyses the reaction Endohydrolysis of the N-glycosidic bond at one specific adenosine on the 28S rRNA.. Its function is as follows. Inhibits translation in rabbit reticulocytes. In Drimia maritima (Sea squill), this protein is Ribosome-inactivating protein charybdin.